Here is a 437-residue protein sequence, read N- to C-terminus: Serine hydroxymethyltransferase (437 aa).

Residues Leu130 and 134 to 136 each bind (6S)-5,6,7,8-tetrahydrofolate; that span reads GHL. Lys239 is modified (N6-(pyridoxal phosphate)lysine). 363–365 contributes to the (6S)-5,6,7,8-tetrahydrofolate binding site; it reads TPF.

This sequence belongs to the SHMT family. In terms of assembly, homodimer. The cofactor is pyridoxal 5'-phosphate.

The protein localises to the cytoplasm. The enzyme catalyses (6R)-5,10-methylene-5,6,7,8-tetrahydrofolate + glycine + H2O = (6S)-5,6,7,8-tetrahydrofolate + L-serine. The protein operates within one-carbon metabolism; tetrahydrofolate interconversion. It participates in amino-acid biosynthesis; glycine biosynthesis; glycine from L-serine: step 1/1. Functionally, catalyzes the reversible interconversion of serine and glycine with tetrahydrofolate (THF) serving as the one-carbon carrier. This reaction serves as the major source of one-carbon groups required for the biosynthesis of purines, thymidylate, methionine, and other important biomolecules. Also exhibits THF-independent aldolase activity toward beta-hydroxyamino acids, producing glycine and aldehydes, via a retro-aldol mechanism. The polypeptide is Serine hydroxymethyltransferase (Bartonella henselae (strain ATCC 49882 / DSM 28221 / CCUG 30454 / Houston 1) (Rochalimaea henselae)).